We begin with the raw amino-acid sequence, 574 residues long: Phospholipase B-like protein A (574 aa).

The N-terminal stretch at 1-20 (MRVIRSLLLLTIAIIGSVLS) is a signal peptide. 3 N-linked (GlcNAc...) asparagine glycosylation sites follow: Asn-159, Asn-195, and Asn-415.

It belongs to the phospholipase B-like family.

The protein localises to the secreted. Its function is as follows. Phospholipase that removes both fatty-acid chains from phosphatidylcholine and produces the water-soluble glycerophosphorylcholine. In addition to phosphatidylcholine deacylation, it also hydrolyzes phosphatidylinositol and phosphatidylethanolamine. The polypeptide is Phospholipase B-like protein A (plbA) (Dictyostelium discoideum (Social amoeba)).